Reading from the N-terminus, the 356-residue chain is Testis-expressed protein 19.1 (356 aa).

The interaction with LIRE1 stretch occupies residues 1 to 78 (MCPPVSVRHG…WDAEPMEHLS (78 aa)). Residues 59 to 72 (LSEEEEEEEVWDAE) show a composition bias toward acidic residues. A disordered region spans residues 59–107 (LSEEEEEEEVWDAEPMEHLSESESLESDSKQDAGSEQDAGSEPNTRSEQ). Over residues 73–91 (PMEHLSESESLESDSKQDA) the composition is skewed to basic and acidic residues. An important for interaction with piRNA region spans residues 139-186 (QWVVFSISVPTELLPQEAVPLDLGPEDVEWTQALPWRLDVLFPCSHRL).

Interacts with UBR2; does not lead to Tex19.1 degradation and stabilizes it. Interacts with piRNA-associated proteins DDX4, EDC4, MAEL, PIWIL1, PIWIL2, RANBP9 and TDRD6. Interacts with L1RE1.

It localises to the cytoplasm. In terms of biological role, required during spermatogenesis and placenta development, participating in the repression of retrotransposable elements and prevent their mobilization. Collaborates with the Piwi-interacting RNA (piRNA) pathway, which mediates the repression of transposable elements during meiosis by forming complexes composed of piRNAs and Piwi proteins. Interacts with Piwi proteins and directly binds piRNAs, a class of 24 to 30 nucleotide RNAs that are generated by a Dicer-independent mechanism and are primarily derived from transposons and other repeated sequence elements. Also during spermatogenesis, promotes, with UBR2, SPO11-dependent recombination foci to accumulate and drive robust homologous chromosome synapsis. Interacts with LINE-1 retrotransposon encoded LIRE1, stimulates LIRE1 polyubiquitination, mediated by UBR2, and degradation, inhibiting LINE-1 retrotransposon mobilization. The polypeptide is Testis-expressed protein 19.1 (Tex19.1) (Rattus norvegicus (Rat)).